Reading from the N-terminus, the 476-residue chain is WD repeat, SAM and U-box domain-containing protein 1 (476 aa).

WD repeat units lie at residues Asp10–His47, Phe52–Val91, Pro95–Cys134, Val137–Glu176, Ala178–Glu228, Gly237–Thr276, and Gln279–Ala318. Residues Trp332–Lys396 enclose the SAM domain. The U-box domain occupies Gly403–Lys476. Position 458 is a phosphothreonine (Thr458).

This Homo sapiens (Human) protein is WD repeat, SAM and U-box domain-containing protein 1 (WDSUB1).